We begin with the raw amino-acid sequence, 106 residues long: uncharacterized protein (106 aa).

The next 3 helical transmembrane spans lie at isoleucine 5–isoleucine 27, alanine 42–methionine 64, and leucine 76–phenylalanine 98.

The protein localises to the cell membrane. This is an uncharacterized protein from Archaeoglobus fulgidus (strain ATCC 49558 / DSM 4304 / JCM 9628 / NBRC 100126 / VC-16).